Consider the following 515-residue polypeptide: uncharacterized protein (515 aa).

3 helical membrane-spanning segments follow: residues 1–21, 165–185, and 199–219; these read MSFVVAAPEVVVAAASDLAGI, IGGPGATGLAGGAGGVGGLLF, and GPVGATGGIGGPGGAAVGLFG. A PE domain is found at 1–93; it reads MSFVVAAPEV…AGAYAGAEAA (93 aa). Residues 349–360 show a composition bias toward gly residues; sequence GGTLIGNGGDGG. 2 disordered regions span residues 349-368 and 463-515; these read GGTLIGNGGDGGNSVQTDGF and GVSG…SPGG.

It belongs to the mycobacterial PE family. PGRS subfamily.

The protein localises to the cell membrane. This is an uncharacterized protein from Mycobacterium tuberculosis (strain CDC 1551 / Oshkosh).